We begin with the raw amino-acid sequence, 208 residues long: Large ribosomal subunit protein eL13 (208 aa).

Phosphoserine is present on residues Ser-177 and Ser-180.

Belongs to the eukaryotic ribosomal protein eL13 family. In terms of assembly, component of the large ribosomal subunit (LSU). Mature yeast ribosomes consist of a small (40S) and a large (60S) subunit. The 40S small subunit contains 1 molecule of ribosomal RNA (18S rRNA) and at least 33 different proteins. The large 60S subunit contains 3 rRNA molecules (25S, 5.8S and 5S rRNA) and at least 46 different proteins.

It is found in the cytoplasm. Functionally, component of the ribosome, a large ribonucleoprotein complex responsible for the synthesis of proteins in the cell. The small ribosomal subunit (SSU) binds messenger RNAs (mRNAs) and translates the encoded message by selecting cognate aminoacyl-transfer RNA (tRNA) molecules. The large subunit (LSU) contains the ribosomal catalytic site termed the peptidyl transferase center (PTC), which catalyzes the formation of peptide bonds, thereby polymerizing the amino acids delivered by tRNAs into a polypeptide chain. The nascent polypeptides leave the ribosome through a tunnel in the LSU and interact with protein factors that function in enzymatic processing, targeting, and the membrane insertion of nascent chains at the exit of the ribosomal tunnel. This is Large ribosomal subunit protein eL13 (rpl13) from Schizosaccharomyces pombe (strain 972 / ATCC 24843) (Fission yeast).